The sequence spans 946 residues: MIESTTSHQDFQQRSMTGYALEHPSYRVRGALFRHQDDGRLLSGTSSNFFHVRSSSKITGCGGDLEVIHALELERSQHTGLPVRVTNVVVFGSNDVVRLIQPIEGTEDVIVNGDYHVSIVQSVELFESSTVSKSRILKLPGKIVAVNAEKHSNTELLLVFLLETGLYHYSFCAQTSDHFQCIQAFRCNRPITSGLLWRDSGLLHVAYYDGFVRVGVVHEQYDDMLLVKRVAVNRNNLSVLLDVVFEEIGRIQKFEDTEKQRREDMLTTSKCLSDKLVSEEEVVEGDTATEDFAKLKVDFKNQSIRCERVSQRLISLRKLITIIKSYMDMNDQIEQMIALLVDQLEELEKLEQLCDEVQKTGNQNLIGKSWIAVEEKRMVVDELIAKVNSDQIKKHSAEWGNKIDQIIDQLNGCSESAKDMRMIISQNIFEHRGDKKDVYTHFVLDSQSRDITLYCLSGLTTLAIYPRKGKRHTSKTTNIRKSQIFRVASISLDASFATCLTAACAMKSAEGVYVADQNAVFPIYFYSEKRYLDAGNQLQIPAFDSISSILIEPHQMILGSVTGGLLHLSFDFASNYEHFVVASSMLAHPISSGAVNCIKLLATGESLLALHCTDAEVVVSEKDQDRWHRVTHHTGGAHSIAVTPFSVDERGSFAVVASDTFVRLKALQYAEESLIGLHDLGESRAEDENGHPIEVLNVSLDPSMQYRQLPCKLRYAVGFSDKAIRTYVALLTGQHDFTVTEKFIAQIEPLFSVQNMICFHGRPMGCYVSCAKTLQIWNDLDRHQQKKLKSERMQLLKLSSSVTSMERTEGFLLVGFADDRLSIYEEKGNGAVDLVGTIENWHTGLNDRSVLGLRTRISKTSCGTRLFIHSLTAHHIVIHTVLVTSSKIEQHDFIVAHEHSMSQPIGFEFVSYKYFEFLVYGRGISNEKLSIEDRKRMDCFRDFEFN.

The stretch at 326–363 (YMDMNDQIEQMIALLVDQLEELEKLEQLCDEVQKTGNQ) forms a coiled coil.

In terms of biological role, may have a role in tumor suppression. This chain is Protein dct-6, found in Caenorhabditis briggsae.